The primary structure comprises 723 residues: MENMAEEELLPQEKEEAQVRVPTPDSAPVPAPAADTALDSAPTPDSAPAPALAPAPAPALSPSLASVPEEAESKRHISIQRRLADLEKLAFGTEGDVDSASSLNSDNLENIQTCPLCPKEKFRAYSSHKLRRHLQNLHWKISVEFEGSRMCICHLACRPVKPTIVGEQISSKLGAHYHCIICSATITRRTDMLGHVKRHVNKGETKSRYISASTAKSSNEVLKETDTDIQVFPNYSIPQKTDSYFNPKMKLNRQIIFCTLAALAEERKPLECLDAFGATGIMGLQWAKHLGNAVKVTINDLNENSVTLIQKNCHLNKLKVVVDSEEKEEGDGLEDCSTAGDIQVTRMDANVLMHLRSFDFIHLDPFGTSVNYLDSAFRNVRNLGIVSVTSTDISSLYAKAQHVARRHYGCNIVRTEYYKELAARIVVAAVARAAARCNKGVEVLFAVALEHFVLVVVRVLRGPTSADETAKKIQYLIHCQWCEERIFQKDGNMVEENPYKQLPCNCHGSMPGKTAIELGPLWSSSLFNTGFLKRMLFESIHHGLDDIQPLIKTLIFESECTPQSQCSVHAPSNTNKQEENGVFVKTTDDTTIDIYSAQGKRKSNEMAINVAKKQKTDASTAHPPFYYNIHRHSIKGMNMPKLKKFLCCLSQAGFRVSRTHFDPMGIRTDASLTQFKSILLKYSTPTYTGGQSEGQVPAPEDTVTDPVELSVNDKAEVSGCRRW.

A compositionally biased stretch (acidic residues) spans 1–10 (MENMAEEELL). Residues 1–72 (MENMAEEELL…SLASVPEEAE (72 aa)) form a disordered region. T23 is subject to Phosphothreonine. A compositionally biased stretch (low complexity) spans 32–44 (PAADTALDSAPTP). A compositionally biased stretch (pro residues) spans 45–59 (DSAPAPALAPAPAPA). S61 is modified (phosphoserine). The Nucleolar localization signal motif lies at 128–132 (HKLRR). The C2H2-type zinc-finger motif lies at 177 to 199 (YHCIICSATITRRTDMLGHVKRH). A Trm1 methyltransferase domain is found at 220-679 (EVLKETDTDI…ASLTQFKSIL (460 aa)). The S-adenosyl-L-methionine site is built by R253, D300, D348, and A349. C479, C482, C504, and C506 together coordinate Zn(2+). K576 is covalently cross-linked (Glycyl lysine isopeptide (Lys-Gly) (interchain with G-Cter in SUMO2)). Phosphoserine is present on S603.

Belongs to the class I-like SAM-binding methyltransferase superfamily. Trm1 family.

The protein resides in the nucleus. The protein localises to the nucleolus. It catalyses the reaction guanosine(27) in tRNA(Tyr) + 2 S-adenosyl-L-methionine = N(2)-dimethylguanosine(27) in tRNA(Tyr) + 2 S-adenosyl-L-homocysteine + 2 H(+). Functionally, specifically dimethylates a single guanine residue at position 27 of tRNA(Tyr) using S-adenosyl-L-methionine as donor of the methyl groups. Dimethylation at position 27 of tRNA(Tyr) is required for efficient translation of tyrosine codons. Also required to maintain 3-(3-amino-3-carboxypropyl)uridine (acp3U) in the D-loop of several cytoplasmic tRNAs. This Rattus norvegicus (Rat) protein is tRNA (guanine(27)-N(2))-dimethyltransferase.